Reading from the N-terminus, the 498-residue chain is Glutamate--tRNA ligase (498 aa).

The short motif at 11-21 is the 'HIGH' region element; sequence PSPTGHLHIGN. The short motif at 261 to 265 is the 'KMSKS' region element; the sequence is KLSKR. Position 264 (Lys264) interacts with ATP.

The protein belongs to the class-I aminoacyl-tRNA synthetase family. Glutamate--tRNA ligase type 1 subfamily. In terms of assembly, monomer.

The protein localises to the cytoplasm. The enzyme catalyses tRNA(Glu) + L-glutamate + ATP = L-glutamyl-tRNA(Glu) + AMP + diphosphate. Its function is as follows. Catalyzes the attachment of glutamate to tRNA(Glu) in a two-step reaction: glutamate is first activated by ATP to form Glu-AMP and then transferred to the acceptor end of tRNA(Glu). In Oenococcus oeni (strain ATCC BAA-331 / PSU-1), this protein is Glutamate--tRNA ligase.